Reading from the N-terminus, the 319-residue chain is Cytochrome f (319 aa).

Positions 1-34 are cleaved as a signal peptide; sequence MQNRNTYDLKKKMTRLISVLVMIHIITRTSISNA. The heme site is built by Y35, C55, C58, and H59. Residues 285-304 form a helical membrane-spanning segment; sequence VKGLLLFLASVILAQIFLVL.

It belongs to the cytochrome f family. In terms of assembly, the 4 large subunits of the cytochrome b6-f complex are cytochrome b6, subunit IV (17 kDa polypeptide, petD), cytochrome f and the Rieske protein, while the 4 small subunits are PetG, PetL, PetM and PetN. The complex functions as a dimer. Requires heme as cofactor.

Its subcellular location is the plastid. It localises to the chloroplast thylakoid membrane. Component of the cytochrome b6-f complex, which mediates electron transfer between photosystem II (PSII) and photosystem I (PSI), cyclic electron flow around PSI, and state transitions. The polypeptide is Cytochrome f (petA) (Picea abies (Norway spruce)).